The primary structure comprises 465 residues: UDP-glucose:undecaprenyl-phosphate glucose-1-phosphate transferase (465 aa).

5 consecutive transmembrane segments (helical) span residues 23-43 (FSDILIIFLGIYFSCFINDYF), 46-66 (LHYVLMALVALVVFQMIGGIT), 82-102 (ILILKNWSLSFLLTLGFVTLF), 105-125 (FDLTFRTFIFWYLAVCAGFVV), and 280-300 (IIVSSLILILISPILLVIATA).

This sequence belongs to the bacterial sugar transferase family.

The protein resides in the cell inner membrane. The catalysed reaction is di-trans,octa-cis-undecaprenyl phosphate + UDP-alpha-D-glucose = alpha-D-glucosyl di-trans,octa-cis-undecaprenyl diphosphate + UMP. The protein operates within capsule biogenesis; capsule polysaccharide biosynthesis. Is likely the initiating enzyme for the K2 capsular polysaccharide synthesis. Catalyzes the transfer of the glucose-1-phosphate moiety from UDP-Glc onto the carrier lipid undecaprenyl phosphate (C55-P), forming a phosphoanhydride bond yielding to glucosyl-pyrophosphoryl-undecaprenol (Glc-PP-C55). This chain is UDP-glucose:undecaprenyl-phosphate glucose-1-phosphate transferase, found in Klebsiella pneumoniae.